Consider the following 226-residue polypeptide: Thiopurine S-methyltransferase (226 aa).

4 residues coordinate S-adenosyl-L-methionine: Trp-10, Leu-47, Glu-68, and Arg-130.

This sequence belongs to the class I-like SAM-binding methyltransferase superfamily. TPMT family.

It localises to the cytoplasm. It carries out the reaction S-adenosyl-L-methionine + a thiopurine = S-adenosyl-L-homocysteine + a thiopurine S-methylether.. In Shewanella sediminis (strain HAW-EB3), this protein is Thiopurine S-methyltransferase.